We begin with the raw amino-acid sequence, 122 residues long: uncharacterized protein (122 aa).

Transmembrane regions (helical) follow at residues 14 to 34 (WLWILTAILAISFFVICFNNV) and 83 to 103 (IIGVAFGLGFVGTMLIDYFII).

The protein localises to the cell membrane. This is an uncharacterized protein from Ureaplasma parvum serovar 3 (strain ATCC 700970).